A 277-amino-acid polypeptide reads, in one-letter code: Undecaprenyl-diphosphatase (277 aa).

A run of 8 helical transmembrane segments spans residues 19–39 (FLPV…PFYG), 44–64 (FDDL…LFLY), 89–109 (FHFL…GFIA), 122–142 (LLEI…VAEW), 154–174 (IGFK…IPGM), 195–215 (AEFS…YKLI), 224–244 (NTIP…TLVI), and 257–277 (SVFG…TKLI).

It belongs to the UppP family.

Its subcellular location is the cell inner membrane. The catalysed reaction is di-trans,octa-cis-undecaprenyl diphosphate + H2O = di-trans,octa-cis-undecaprenyl phosphate + phosphate + H(+). Its function is as follows. Catalyzes the dephosphorylation of undecaprenyl diphosphate (UPP). Confers resistance to bacitracin. The protein is Undecaprenyl-diphosphatase of Leptospira interrogans serogroup Icterohaemorrhagiae serovar copenhageni (strain Fiocruz L1-130).